The sequence spans 158 residues: Chromobox protein homolog 7 (158 aa).

Residues 11-69 (FAVESIRKKRVRKGKVEYLVKWKGWPPKYSTWEPEEHILDPRLVMAYEEKEEKDRASGY) enclose the Chromo domain. Residues 60–124 (KEEKDRASGY…PPPWTPMLPS (65 aa)) form a disordered region. Residues 68–78 (GYRKRGPKPKR) are compositionally biased toward basic residues.

Component of a PRC1-like complex. Distinct PRC1-like core complexes are composed of a RING1 subunit (RING1B or RING1A), one of the six PCGF proteins (PCGF1-6), one PHC protein (PHC1-3) and one of the CBX proteins (CBX2, CBX4, CBX6, CBX7 or CBX8). The composition of the PRC1 complex may differ between the PRC1 complex in pluripotent embryonic stem cells containing RNF2, CBX7 and PCGF2, and the PRC1 complex in differentiating cells containing RNF2, CBX2, CBX4 and BMI1. Interacts with RING1. Interacts with RNF2/RING1B. Interacts with PCGF1, PCGF2, PCGF3, PCGF5 and PCGF6. Interacts (via chromodomain) with histone H3K9Me3 and H3K27me3. Interacts with H3K9Me2 and H4K20Me1. Interacts (via chromodomain) with single-stranded and double-stranded RNA; RNA binding seems to be required for the localization to chromatin.

It is found in the nucleus. The protein resides in the chromosome. Its function is as follows. Component of a Polycomb group (PcG) multiprotein PRC1-like complex, a complex class required to maintain the transcriptionally repressive state of many genes, including Hox genes, throughout development. PcG PRC1 complex acts via chromatin remodeling and modification of histones; it mediates monoubiquitination of histone H2A 'Lys-119', rendering chromatin heritably changed in its expressibility. Promotes histone H3 trimethylation at 'Lys-9' (H3K9me3). Binds to histone H3 trimethylated 'Lys-9' (H3K9me3) or at 'Lys-27' (H3K27me3). May possibly also bind trimethylated lysine residues in other proteins (in vitro). Binds non-coding, single-stranded and double-stranded RNA. Plays a role in the timely repression of differentiation-specific genes in pluripotent embryonic stem cells to maintain the undifferentiated state. Regulator of cellular lifespan by maintaining the repression of CDKN2A, but not by inducing telomerase activity. The sequence is that of Chromobox protein homolog 7 (Cbx7) from Rattus norvegicus (Rat).